The chain runs to 104 residues: Enhancer of rudimentary homolog 1 (104 aa).

The protein belongs to the E(R) family. In terms of assembly, homodimer. Component of the erh1-mmi1 complex. Interacts with mmi1 (via N-terminus) in a 2:2 stoichiometry.

It is found in the nucleus. The protein localises to the cytoplasm. In terms of biological role, forms part of the erh1-mmi1 complex that recruits the CCR4-NOT complex and the NURS complex to target RNAs. Suppresses the meiotic program during vegetative growth and promotes the meiotic program during mating. Recruitment of the NURS complex to target mRNAs promotes mRNA decay by engagement of the nuclear exosome, and formation of heterochromatin islands at meiotic genes silenced by the exosome. Recruitment of the CCR4-NOT complex to target RNAs promotes heterochromatin formation at RNAi-dependent heterochromatin domains (HOODs), including a subset of meiotic genes, lncRNAs and retrotransposons. Recruitment of the CCR4-NOT complex to rDNA promotes rDNA heterochromatin assembly. The sequence is that of Enhancer of rudimentary homolog 1 from Schizosaccharomyces pombe (strain 972 / ATCC 24843) (Fission yeast).